The sequence spans 706 residues: Gamma-adducin (706 aa).

The span at M1–T11 shows a compositional bias: low complexity. Residues M1–R23 form a disordered region. The residue at position 2 (S2) is an N-acetylserine. 8 positions are modified to phosphoserine: S31, S42, S64, S402, S414, S423, S442, and S461. Disordered regions lie at residues A471–N495, P534–H556, Q574–E610, and T651–A706. Residue K484 forms a Glycyl lysine isopeptide (Lys-Gly) (interchain with G-Cter in SUMO2) linkage. Residues S583, S585, and S590 each carry the phosphoserine modification. Composition is skewed to low complexity over residues S590–P605 and T651–I662. Phosphoserine occurs at positions 673, 677, 679, 681, and 683. A compositionally biased stretch (basic residues) spans P682 to A706. The tract at residues K684 to K701 is interaction with calmodulin.

Belongs to the aldolase class II family. Adducin subfamily. Heterodimer of an alpha and a gamma subunit. Sumoylated. In terms of processing, proteolytically cleaved by asparagine endopeptidase (AEP) into 2 fragments. Overexpression of the 1-357 fragment induces neuronal apoptosis, and overexpression of either 1-357 or 358-706 fragment increases the degeneration of dendritic spines. Overexpression of the 1-357 fragment impairs neurite outgrowth by downregulating the expression of Rac2, and induces synaptic dysfunction and cognitive impairments in tau P301S transgenic mice, a mouse model for Alzheimer disease (AD). As to expression, cleavage fragment 1-357 is expressed in the brain and the expression increases with age (at protein level). The fragment is expressed in the cortex, hippocampal CA1 region and hippocampal dentate gyrus in tau P301S transgenic mice, a mouse model for Alzheimer disease (AD) (at protein level). The fragment is only weakly expressed in non-transgenic mouse brain sections (at protein level).

Its subcellular location is the cytoplasm. The protein resides in the cytoskeleton. It is found in the cell membrane. In terms of biological role, membrane-cytoskeleton-associated protein that promotes the assembly of the spectrin-actin network. Plays a role in actin filament capping. Binds to calmodulin. Involved in myogenic reactivity of the renal afferent arteriole (Af-art), renal interlobular arteries and middle cerebral artery (MCA) to increased perfusion pressure. Involved in regulation of potassium channels in the vascular smooth muscle cells (VSMCs) of the Af-art and MCA ex vivo. Involved in regulation of glomerular capillary pressure, glomerular filtration rate (GFR) and glomerular nephrin expression in response to hypertension. Involved in renal blood flow (RBF) autoregulation. Plays a role in podocyte structure and function. Regulates globular monomer actin (G-actin) and filamentous polymer actin (F-actin) ratios in the primary podocytes affecting actin cytoskeleton organization. Regulates expression of synaptopodin, RhoA, Rac1 and CDC42 in the renal cortex and the primary podocytes. Regulates expression of nephrin in the glomeruli and in the primary podocytes, expression of nephrin and podocinin in the renal cortex, and expression of focal adhesion proteins integrin alpha-3 and integrin beta-1 in the glomeruli. Involved in cell migration and cell adhesion of podocytes, and in podocyte foot process effacement. Regulates expression of profibrotics markers MMP2, MMP9, TGF beta-1, tubular tight junction protein E-cadherin, and mesenchymal markers vimentin and alpha-SMA. Promotes the growth of neurites. In Mus musculus (Mouse), this protein is Gamma-adducin (Add3).